The sequence spans 865 residues: Aconitate hydratase B (865 aa).

Substrate is bound by residues arginine 191, 244–246, 414–416, and serine 498; these read SSR and QDT. The [4Fe-4S] cluster site is built by cysteine 710, cysteine 769, and cysteine 772. Residues arginine 791 and arginine 796 each contribute to the substrate site.

It belongs to the aconitase/IPM isomerase family. Monomer. AcnB can also form a homodimer. The monomer-homodimer transition is dependent on iron availability and the carboxymethylation of C-273 inhibits the dimer formation. The cofactor is [4Fe-4S] cluster.

The enzyme catalyses citrate = D-threo-isocitrate. It catalyses the reaction (2S,3R)-3-hydroxybutane-1,2,3-tricarboxylate = 2-methyl-cis-aconitate + H2O. The protein operates within organic acid metabolism; propanoate degradation. It participates in carbohydrate metabolism; tricarboxylic acid cycle; isocitrate from oxaloacetate: step 2/2. In terms of biological role, involved in the catabolism of short chain fatty acids (SCFA) via the tricarboxylic acid (TCA)(acetyl degradation route) and the 2-methylcitrate cycle I (propionate degradation route). Catalyzes the reversible isomerization of citrate to isocitrate via cis-aconitate. Also catalyzes the hydration of 2-methyl-cis-aconitate to yield (2R,3S)-2-methylisocitrate. The apo form of AcnB functions as a RNA-binding regulatory protein. During oxidative stress inactive AcnB apo-enzyme without iron sulfur clusters binds the acnB mRNA 3' UTRs (untranslated regions), stabilizes acnB mRNA and increases AcnB synthesis, thus mediating a post-transcriptional positive autoregulatory switch. AcnB also decreases the stability of the sodA transcript. This is Aconitate hydratase B from Escherichia coli (strain K12).